We begin with the raw amino-acid sequence, 444 residues long: Radical S-adenosyl methionine domain-containing protein 1, mitochondrial (444 aa).

A mitochondrion-targeting transit peptide spans M1–S39. One can recognise a Radical SAM core domain in the interval H40 to H274. Residue Y47 coordinates S-adenosyl-L-methionine. C53, C57, and C60 together coordinate [4Fe-4S] cluster. Residues G102, G103 to T104, E135, Q162, R174, and D199 contribute to the S-adenosyl-L-methionine site.

The protein belongs to the anaerobic coproporphyrinogen-III oxidase family. HemW subfamily. [4Fe-4S] cluster is required as a cofactor.

The protein resides in the mitochondrion. May be a heme chaperone, appears to bind heme. Homologous bacterial proteins do not have oxygen-independent coproporphyrinogen-III oxidase activity. Binds 1 [4Fe-4S] cluster. The cluster is coordinated with 3 cysteines and an exchangeable S-adenosyl-L-methionine. The protein is Radical S-adenosyl methionine domain-containing protein 1, mitochondrial (rsad1) of Danio rerio (Zebrafish).